A 199-amino-acid chain; its full sequence is NADH-quinone oxidoreductase subunit C (199 aa).

It belongs to the complex I 30 kDa subunit family. In terms of assembly, NDH-1 is composed of 14 different subunits. Subunits NuoB, C, D, E, F, and G constitute the peripheral sector of the complex.

It is found in the cell inner membrane. It catalyses the reaction a quinone + NADH + 5 H(+)(in) = a quinol + NAD(+) + 4 H(+)(out). NDH-1 shuttles electrons from NADH, via FMN and iron-sulfur (Fe-S) centers, to quinones in the respiratory chain. The immediate electron acceptor for the enzyme in this species is believed to be ubiquinone. Couples the redox reaction to proton translocation (for every two electrons transferred, four hydrogen ions are translocated across the cytoplasmic membrane), and thus conserves the redox energy in a proton gradient. In Rhodobacter capsulatus (Rhodopseudomonas capsulata), this protein is NADH-quinone oxidoreductase subunit C.